The primary structure comprises 89 residues: Probable Fe(2+)-trafficking protein (89 aa).

The protein belongs to the Fe(2+)-trafficking protein family.

Could be a mediator in iron transactions between iron acquisition and iron-requiring processes, such as synthesis and/or repair of Fe-S clusters in biosynthetic enzymes. This is Probable Fe(2+)-trafficking protein from Stenotrophomonas maltophilia (strain K279a).